The sequence spans 497 residues: Proline--tRNA ligase (497 aa).

Belongs to the class-II aminoacyl-tRNA synthetase family. ProS type 3 subfamily. In terms of assembly, homodimer.

It localises to the cytoplasm. The enzyme catalyses tRNA(Pro) + L-proline + ATP = L-prolyl-tRNA(Pro) + AMP + diphosphate. Functionally, catalyzes the attachment of proline to tRNA(Pro) in a two-step reaction: proline is first activated by ATP to form Pro-AMP and then transferred to the acceptor end of tRNA(Pro). This chain is Proline--tRNA ligase, found in Bacteroides fragilis (strain ATCC 25285 / DSM 2151 / CCUG 4856 / JCM 11019 / LMG 10263 / NCTC 9343 / Onslow / VPI 2553 / EN-2).